Here is a 242-residue protein sequence, read N- to C-terminus: MSGHSKWHNIQGRKNAQDAKRGKVFQKLSREIYMAAKSGGPDPDGNPALRMVIDKARSNNMPKDNIQRAIKKAEGGSDEHYDEITYEGYAPGGVAVFVEALTDNKNRTASDVRVAFTRNGGSLGATGSVAYMFDRKGYIVIDRSTTDADEDQVLLDVMDAGGDDLQTSDDAYEIYTDPKQFAEVRDALIKAGYKLADAELTMIPQNTTPVPADKKEQFEHLVEALEDSDDVQNVYTAAADED.

A disordered region spans residues 1–22 (MSGHSKWHNIQGRKNAQDAKRG).

This sequence belongs to the TACO1 family.

The protein resides in the cytoplasm. This chain is Probable transcriptional regulatory protein LBA0733, found in Lactobacillus acidophilus (strain ATCC 700396 / NCK56 / N2 / NCFM).